The chain runs to 258 residues: Type III pantothenate kinase (258 aa).

6 to 13 (DVGNTNTV) contributes to the ATP binding site. Substrate contacts are provided by residues Tyr-100 and 107–110 (GADR). Residue Asp-109 is the Proton acceptor of the active site. Asp-129 is a K(+) binding site. Thr-132 is a binding site for ATP. Thr-184 is a binding site for substrate.

It belongs to the type III pantothenate kinase family. Homodimer. The cofactor is NH4(+). Requires K(+) as cofactor.

Its subcellular location is the cytoplasm. It catalyses the reaction (R)-pantothenate + ATP = (R)-4'-phosphopantothenate + ADP + H(+). The protein operates within cofactor biosynthesis; coenzyme A biosynthesis; CoA from (R)-pantothenate: step 1/5. In terms of biological role, catalyzes the phosphorylation of pantothenate (Pan), the first step in CoA biosynthesis. This chain is Type III pantothenate kinase, found in Bacillus licheniformis (strain ATCC 14580 / DSM 13 / JCM 2505 / CCUG 7422 / NBRC 12200 / NCIMB 9375 / NCTC 10341 / NRRL NRS-1264 / Gibson 46).